A 441-amino-acid chain; its full sequence is S-adenosylmethionine synthase 1 (441 aa).

Glu-9 serves as a coordination point for Mg(2+). His-15 lines the ATP pocket. A K(+)-binding site is contributed by Glu-43. L-methionine-binding residues include Glu-56 and Gln-99. Residues 167–169, 235–238, Asp-246, 252–253, Ala-269, Lys-273, and Lys-277 contribute to the ATP site; these read DGK, SGRF, and RK. Asp-246 is an L-methionine binding site. Position 277 (Lys-277) interacts with L-methionine.

Belongs to the AdoMet synthase family. Homotetramer. Mn(2+) serves as cofactor. Requires Mg(2+) as cofactor. Co(2+) is required as a cofactor. It depends on K(+) as a cofactor.

Its subcellular location is the cytoplasm. It catalyses the reaction L-methionine + ATP + H2O = S-adenosyl-L-methionine + phosphate + diphosphate. It functions in the pathway amino-acid biosynthesis; S-adenosyl-L-methionine biosynthesis; S-adenosyl-L-methionine from L-methionine: step 1/1. Functionally, catalyzes the formation of S-adenosylmethionine from methionine and ATP. The reaction comprises two steps that are both catalyzed by the same enzyme: formation of S-adenosylmethionine (AdoMet) and triphosphate, and subsequent hydrolysis of the triphosphate. This chain is S-adenosylmethionine synthase 1 (SAMS1), found in Daucus carota (Wild carrot).